The chain runs to 474 residues: Cytochrome c-552 (474 aa).

The signal sequence occupies residues 1–29 (MSIKHWMASSVSVTALVMTALLNITAVSA). Heme c is bound at residue His-91. Residues Cys-119, Cys-122, and Lys-123 each contribute to the heme site. Heme c contacts are provided by Cys-157, Cys-160, His-161, Cys-206, Cys-209, and His-210. Ca(2+) contacts are provided by Glu-212, Tyr-213, Lys-258, and Gln-260. Tyr-213 serves as a coordination point for substrate. His-261 is a binding site for substrate. The heme c site is built by His-272, Cys-279, Cys-282, His-283, His-298, Cys-311, Cys-314, His-315, and His-390.

This sequence belongs to the cytochrome c-552 family. It depends on Ca(2+) as a cofactor. Heme c is required as a cofactor.

It localises to the periplasm. The catalysed reaction is 6 Fe(III)-[cytochrome c] + NH4(+) + 2 H2O = 6 Fe(II)-[cytochrome c] + nitrite + 8 H(+). It participates in nitrogen metabolism; nitrate reduction (assimilation). Catalyzes the reduction of nitrite to ammonia, consuming six electrons in the process. In Vibrio vulnificus (strain CMCP6), this protein is Cytochrome c-552.